A 354-amino-acid chain; its full sequence is Probable calcium-binding protein CML50 (354 aa).

2 stretches are compositionally biased toward low complexity: residues 1 to 10 and 28 to 71; these read MSGYPPTSQG and YSSG…SSYG. The interval 1–159 is disordered; it reads MSGYPPTSQG…PASSGHGGGY (159 aa). The segment covering 72–81 has biased composition (pro residues); sequence APPPSAPYAP. Residues 106-117 are compositionally biased toward low complexity; it reads GSSDYGSYGAGP. 2 EF-hand domains span residues 183–218 and 249–284; these read GTDP…YQQR and YSLQ…LGFS. Residues Asp196, Asp198, Ser200, Glu207, Asp262, Asp264, Ser266, Arg268, and Glu273 each contribute to the Ca(2+) site.

Its function is as follows. Potential calcium sensor. The sequence is that of Probable calcium-binding protein CML50 (CML50) from Arabidopsis thaliana (Mouse-ear cress).